Reading from the N-terminus, the 114-residue chain is DNA-directed RNA polymerase subunit omega (114 aa).

This sequence belongs to the RNA polymerase subunit omega family. As to quaternary structure, the RNAP catalytic core consists of 2 alpha, 1 beta, 1 beta' and 1 omega subunit. When a sigma factor is associated with the core the holoenzyme is formed, which can initiate transcription.

It carries out the reaction RNA(n) + a ribonucleoside 5'-triphosphate = RNA(n+1) + diphosphate. Its function is as follows. Promotes RNA polymerase assembly. Latches the N- and C-terminal regions of the beta' subunit thereby facilitating its interaction with the beta and alpha subunits. This is DNA-directed RNA polymerase subunit omega from Novosphingobium aromaticivorans (strain ATCC 700278 / DSM 12444 / CCUG 56034 / CIP 105152 / NBRC 16084 / F199).